The chain runs to 894 residues: Disease resistance protein SUMM2 (894 aa).

A coiled-coil region spans residues 31-71 (ELSKNVVAMKKDMEVLKKKRDDVKRRVDIEEFTRRRERLSQ). Positions 140-443 (TLATPIARIE…CEGFIDENES (304 aa)) constitute an NB-ARC domain. 183-190 (GMGGVGKT) is a binding site for ATP. LRR repeat units follow at residues 517-538 (SVRR…PECL), 539-561 (ELTT…FFRC), 564-586 (MLVV…ISKL), 588-610 (SLRY…QELK), 611-633 (KLRY…SNIS), 634-656 (SLRK…EELQ), and 660-681 (HLEV…LNAP).

This sequence belongs to the disease resistance NB-LRR family. As to quaternary structure, interacts with PAT1.

With respect to regulation, negatively regulated by the MEKK1-MKK1-MKK2-MPK4 kinase cascade. Disease resistance protein that mediates defense responses against the bacterial pathogen Pseudomonas syringae pv tomato strain DC3000, and the virulent oomycete Hyaloperonospora arabidopsidis isolate Noco2. Becomes active when the MEKK1-MKK1-MKK2-MPK4 kinase cascade is disrupted by the microbial effector hopAI1. Does not seem to be required for the activation of MPK4 by flg22, or flg22-induced up-regulation of PAD3. Functions downstream of MEKK2/SUMM1 in immune responses, including cell death and defense responses. This chain is Disease resistance protein SUMM2, found in Arabidopsis thaliana (Mouse-ear cress).